The sequence spans 448 residues: MKSYEVNFDGLVGPTHNYGGLSYGNVASQSNSQQSSNPKEAALQGLAKMKALMEMGFQQGVLAPQERPDVAALRRLGFSGTDAQVIERAAKEAMPLLVASCSASSMWVANAATVSPSADTADGRVHFTAANLNCKYHRSIEHPTTSRVLGAMFANQQHFAHHAALPAVAQFGDEGAANHTRFCREYGDAGVEFFVFGRSAFDTRYPAPQKYPARQTLEASQAVARLHGLRDDGVVYAQQNPAVIDQGVFHNDVIAVGNGEVLFYHEDAFLDTDQMLAELQAKLAKVGGKFQSVCVPRSAVTVDDAVRSYLFNSQLLSRPDGSMLLIVPEECRGNERVWNYLQGLTSSGGLIREVKVFDLKQSMQNGGGPACLRLRVALNETELAAVNPGVIMTAPLYGSLTAWVEKHYRDRLTESDLADPQLLLECRTALDELTQILKLGAVYPFQIN.

Substrate contacts are provided by residues 19-28 (GGLSYGNVAS), N110, and 137-138 (HR). Residue E174 is part of the active site. R214 is a substrate binding site. H250 is a catalytic residue. Residues D252 and N365 each contribute to the substrate site. C371 acts as the Nucleophile in catalysis.

Belongs to the succinylarginine dihydrolase family. As to quaternary structure, homodimer.

The enzyme catalyses N(2)-succinyl-L-arginine + 2 H2O + 2 H(+) = N(2)-succinyl-L-ornithine + 2 NH4(+) + CO2. It functions in the pathway amino-acid degradation; L-arginine degradation via AST pathway; L-glutamate and succinate from L-arginine: step 2/5. Catalyzes the hydrolysis of N(2)-succinylarginine into N(2)-succinylornithine, ammonia and CO(2). The sequence is that of N-succinylarginine dihydrolase from Pseudomonas fluorescens (strain Pf0-1).